We begin with the raw amino-acid sequence, 292 residues long: UPF0696 protein C11orf68 (292 aa).

Residues 1–11 (MAAAAAAAVAG) are compositionally biased toward low complexity. The interval 1 to 60 (MAAAAAAAVAGVGRGGGGAEPRQERSRARGWAGVERSEGRRMEPGEELEEEGSPGGREDG) is disordered. Arginine 29 bears the Omega-N-methylarginine mark. Over residues 35 to 44 (ERSEGRRMEP) the composition is skewed to basic and acidic residues.

This sequence belongs to the UPF0696 family.

This is UPF0696 protein C11orf68 (C11orf68) from Homo sapiens (Human).